The sequence spans 357 residues: UDP-N-acetylglucosamine--N-acetylmuramyl-(pentapeptide) pyrophosphoryl-undecaprenol N-acetylglucosamine transferase (357 aa).

Residues 14 to 16 (TGG), Asn128, Arg169, Ser193, Ile248, and Gln292 contribute to the UDP-N-acetyl-alpha-D-glucosamine site.

This sequence belongs to the glycosyltransferase 28 family. MurG subfamily.

The protein localises to the cell inner membrane. The catalysed reaction is di-trans,octa-cis-undecaprenyl diphospho-N-acetyl-alpha-D-muramoyl-L-alanyl-D-glutamyl-meso-2,6-diaminopimeloyl-D-alanyl-D-alanine + UDP-N-acetyl-alpha-D-glucosamine = di-trans,octa-cis-undecaprenyl diphospho-[N-acetyl-alpha-D-glucosaminyl-(1-&gt;4)]-N-acetyl-alpha-D-muramoyl-L-alanyl-D-glutamyl-meso-2,6-diaminopimeloyl-D-alanyl-D-alanine + UDP + H(+). Its pathway is cell wall biogenesis; peptidoglycan biosynthesis. In terms of biological role, cell wall formation. Catalyzes the transfer of a GlcNAc subunit on undecaprenyl-pyrophosphoryl-MurNAc-pentapeptide (lipid intermediate I) to form undecaprenyl-pyrophosphoryl-MurNAc-(pentapeptide)GlcNAc (lipid intermediate II). The polypeptide is UDP-N-acetylglucosamine--N-acetylmuramyl-(pentapeptide) pyrophosphoryl-undecaprenol N-acetylglucosamine transferase (Bdellovibrio bacteriovorus (strain ATCC 15356 / DSM 50701 / NCIMB 9529 / HD100)).